The following is a 214-amino-acid chain: Probable nicotinate-nucleotide adenylyltransferase (214 aa).

It belongs to the NadD family.

The catalysed reaction is nicotinate beta-D-ribonucleotide + ATP + H(+) = deamido-NAD(+) + diphosphate. The protein operates within cofactor biosynthesis; NAD(+) biosynthesis; deamido-NAD(+) from nicotinate D-ribonucleotide: step 1/1. Catalyzes the reversible adenylation of nicotinate mononucleotide (NaMN) to nicotinic acid adenine dinucleotide (NaAD). The polypeptide is Probable nicotinate-nucleotide adenylyltransferase (Aeromonas hydrophila subsp. hydrophila (strain ATCC 7966 / DSM 30187 / BCRC 13018 / CCUG 14551 / JCM 1027 / KCTC 2358 / NCIMB 9240 / NCTC 8049)).